Consider the following 463-residue polypeptide: Fumarate hydratase class II (463 aa).

Substrate contacts are provided by residues 95 to 97 (SGT), 126 to 129 (HPND), 136 to 138 (SSN), and T184. Residue H185 is the Proton donor/acceptor of the active site. S315 is a catalytic residue. Substrate contacts are provided by residues S316 and 321 to 323 (KIN).

It belongs to the class-II fumarase/aspartase family. Fumarase subfamily. As to quaternary structure, homotetramer.

It localises to the cytoplasm. It carries out the reaction (S)-malate = fumarate + H2O. The protein operates within carbohydrate metabolism; tricarboxylic acid cycle; (S)-malate from fumarate: step 1/1. Functionally, involved in the TCA cycle. Catalyzes the stereospecific interconversion of fumarate to L-malate. This chain is Fumarate hydratase class II, found in Chlamydia muridarum (strain MoPn / Nigg).